We begin with the raw amino-acid sequence, 428 residues long: Gamma-glutamyl phosphate reductase (428 aa).

The protein belongs to the gamma-glutamyl phosphate reductase family.

It is found in the cytoplasm. It catalyses the reaction L-glutamate 5-semialdehyde + phosphate + NADP(+) = L-glutamyl 5-phosphate + NADPH + H(+). It functions in the pathway amino-acid biosynthesis; L-proline biosynthesis; L-glutamate 5-semialdehyde from L-glutamate: step 2/2. Its function is as follows. Catalyzes the NADPH-dependent reduction of L-glutamate 5-phosphate into L-glutamate 5-semialdehyde and phosphate. The product spontaneously undergoes cyclization to form 1-pyrroline-5-carboxylate. The chain is Gamma-glutamyl phosphate reductase from Clostridium tetani (strain Massachusetts / E88).